The following is a 471-amino-acid chain: Glutamate--tRNA ligase (471 aa).

Residues 9–19 (PSPTGYLHVGG) carry the 'HIGH' region motif. Residues Cys-98, Cys-100, Cys-125, and Asp-127 each coordinate Zn(2+). The short motif at 237 to 241 (KLSKR) is the 'KMSKS' region element. Lys-240 provides a ligand contact to ATP.

The protein belongs to the class-I aminoacyl-tRNA synthetase family. Glutamate--tRNA ligase type 1 subfamily. In terms of assembly, monomer. Requires Zn(2+) as cofactor.

Its subcellular location is the cytoplasm. The catalysed reaction is tRNA(Glu) + L-glutamate + ATP = L-glutamyl-tRNA(Glu) + AMP + diphosphate. In terms of biological role, catalyzes the attachment of glutamate to tRNA(Glu) in a two-step reaction: glutamate is first activated by ATP to form Glu-AMP and then transferred to the acceptor end of tRNA(Glu). The sequence is that of Glutamate--tRNA ligase from Yersinia enterocolitica serotype O:8 / biotype 1B (strain NCTC 13174 / 8081).